A 416-amino-acid chain; its full sequence is Serine carboxypeptidase S10 family member 1 (416 aa).

Positions 1 to 20 (MMKLLFIIISIIFVINVSNS) are cleaved as a signal peptide. Asn33 and Asn84 each carry an N-linked (GlcNAc...) asparagine glycan. Residue Ser156 is part of the active site. Asn235, Asn273, and Asn295 each carry an N-linked (GlcNAc...) asparagine glycan. Residue Asp338 is part of the active site. A glycan (N-linked (GlcNAc...) asparagine) is linked at Asn385. His396 is an active-site residue.

It belongs to the peptidase S10 family.

The protein resides in the secreted. Functionally, probable carboxypeptidase. In Dictyostelium discoideum (Social amoeba), this protein is Serine carboxypeptidase S10 family member 1.